Reading from the N-terminus, the 308-residue chain is D-alanine--D-alanine ligase (308 aa).

Residues 102–302 enclose the ATP-grasp domain; sequence KHVAKAAGIP…FGEFLRWMVE (201 aa). 128-183 is an ATP binding site; sequence PMKPPYVVKPVREGSSFGVVIVKEDQSHPPQVITSSDWRYGDRIMVERYVAGREFT. Mg(2+) contacts are provided by Asp252, Glu269, and Asn271.

It belongs to the D-alanine--D-alanine ligase family. It depends on Mg(2+) as a cofactor. Mn(2+) is required as a cofactor.

The protein localises to the cytoplasm. The catalysed reaction is 2 D-alanine + ATP = D-alanyl-D-alanine + ADP + phosphate + H(+). It participates in cell wall biogenesis; peptidoglycan biosynthesis. Functionally, cell wall formation. This chain is D-alanine--D-alanine ligase, found in Sinorhizobium medicae (strain WSM419) (Ensifer medicae).